The sequence spans 153 residues: Aspartate carbamoyltransferase regulatory chain (153 aa).

C109, C114, C138, and C141 together coordinate Zn(2+).

This sequence belongs to the PyrI family. As to quaternary structure, contains catalytic and regulatory chains. Requires Zn(2+) as cofactor.

Functionally, involved in allosteric regulation of aspartate carbamoyltransferase. In Klebsiella pneumoniae subsp. pneumoniae (strain ATCC 700721 / MGH 78578), this protein is Aspartate carbamoyltransferase regulatory chain.